Consider the following 344-residue polypeptide: AA9 family lytic polysaccharide monooxygenase cel61A (344 aa).

The N-terminal stretch at 1–21 is a signal peptide; it reads MIQKLSNLLVTALAVATGVVG. His-22 contributes to the Cu(2+) binding site. 2 disulfides stabilise this stretch: Cys-77/Cys-198 and Cys-118/Cys-122. The N-linked (GlcNAc...) asparagine glycan is linked to Asn-80. Position 107 (His-107) interacts with Cu(2+). Residue Asn-158 is glycosylated (N-linked (GlcNAc...) asparagine). Residues His-184 and Gln-193 each contribute to the O2 site. Tyr-195 contributes to the Cu(2+) binding site. A disordered region spans residues 262 to 310; the sequence is ATASATVPGGGSGPTSRTTTTARTTQASSRPSSTPPATTSAPAGGPTQT. Positions 275-310 are enriched in low complexity; sequence PTSRTTTTARTTQASSRPSSTPPATTSAPAGGPTQT. A CBM1 domain is found at 307-343; that stretch reads PTQTLYGQCGGSGYSGPTRCAPPATCSTLNPYYAQCL.

It belongs to the polysaccharide monooxygenase AA9 family. Cu(2+) is required as a cofactor.

It is found in the secreted. The enzyme catalyses [(1-&gt;4)-beta-D-glucosyl]n+m + reduced acceptor + O2 = 4-dehydro-beta-D-glucosyl-[(1-&gt;4)-beta-D-glucosyl]n-1 + [(1-&gt;4)-beta-D-glucosyl]m + acceptor + H2O.. Functionally, lytic polysaccharide monooxygenase (LPMO) that depolymerizes crystalline and amorphous polysaccharides via the oxidation of scissile alpha- or beta-(1-4)-glycosidic bonds, yielding C1 or C4 oxidation products. Catalysis by LPMOs requires the reduction of the active-site copper from Cu(II) to Cu(I) by a reducing agent and H(2)O(2) or O(2) as a cosubstrate. Shows activity on beta-glucan and amorphous cellulose. Does not show beta-1-3-glucanase, beta-1,6-glucanase, mannanase, xylanase, beta-1,3-galactosidase, amylase, pectinase, nor chitinase activities. The chain is AA9 family lytic polysaccharide monooxygenase cel61A from Hypocrea jecorina (Trichoderma reesei).